Here is a 1087-residue protein sequence, read N- to C-terminus: Kinesin-like protein KIN-14F (1087 aa).

The Calponin-homology (CH) domain maps to 1–110 (MDQGAMETLP…CILCLKGFYE (110 aa)). The disordered stretch occupies residues 136 to 155 (SSPPQYGIGSESTTDESVSL). The Kinesin motor domain maps to 377-705 (TIRVYCRVRP…LKFAQRVASI (329 aa)). 461 to 468 (GQTGSGKT) provides a ligand contact to ATP. Residues 710 to 749 (ARSNKETGEIRDLKDEISSLKSAMEKKEAELEQLRSGSIR) are a coiled coil. 3 disordered regions span residues 740-858 (LEQL…PVSR), 923-949 (QGGVKKTRAESSKAKAKQPSPARFQKL), and 1004-1087 (DSTL…FMVP). Composition is skewed to polar residues over residues 744-754 (RSGSIRNTTEC), 780-797 (PQPNDGTRSYETRSCSTG), and 836-856 (TDRASTIKSRNKPDVTQNLPV). Residues 1017 to 1033 (EPPSKSKNAQRNSSKNS) show a composition bias toward polar residues. A compositionally biased stretch (basic and acidic residues) spans 1042–1054 (YAHEDTSLVDDKP). Positions 1076-1087 (SRSTHHARFMVP) are enriched in basic residues.

This sequence belongs to the TRAFAC class myosin-kinesin ATPase superfamily. Kinesin family. KIN-14 subfamily. Interacts (via C-terminus) with VDAC3. As to expression, expressed in roots, leaves, stems and flowers (at protein level).

The protein localises to the cytoplasm. Its subcellular location is the cytoskeleton. It is found in the mitochondrion. Required for keeping the ATP levels stable and balancing the aerobic respiration pathways during seed germination at low temperature. This Arabidopsis thaliana (Mouse-ear cress) protein is Kinesin-like protein KIN-14F.